Reading from the N-terminus, the 351-residue chain is Hydroxymethylglutaryl-CoA synthase (351 aa).

Asp28 is a (3S)-3-hydroxy-3-methylglutaryl-CoA binding site. Catalysis depends on Glu80, which acts as the Proton donor/acceptor. The (3S)-3-hydroxy-3-methylglutaryl-CoA site is built by Cys112 and Thr153. Catalysis depends on Cys112, which acts as the Acyl-thioester intermediate. Arg199 serves as a coordination point for CoA. Residues Thr201 and His234 each contribute to the (3S)-3-hydroxy-3-methylglutaryl-CoA site. The active-site Proton donor/acceptor is the His234. Lys239 provides a ligand contact to CoA. 3 residues coordinate (3S)-3-hydroxy-3-methylglutaryl-CoA: Arg243, Asn266, and Ser296.

This sequence belongs to the thiolase-like superfamily. Archaeal HMG-CoA synthase family. As to quaternary structure, interacts with acetoacetyl-CoA thiolase that catalyzes the precedent step in the pathway and with a DUF35 protein. The acetoacetyl-CoA thiolase/HMG-CoA synthase complex channels the intermediate via a fused CoA-binding site, which allows for efficient coupling of the endergonic thiolase reaction with the exergonic HMGCS reaction.

It carries out the reaction acetoacetyl-CoA + acetyl-CoA + H2O = (3S)-3-hydroxy-3-methylglutaryl-CoA + CoA + H(+). The protein operates within metabolic intermediate biosynthesis; (R)-mevalonate biosynthesis; (R)-mevalonate from acetyl-CoA: step 2/3. Its function is as follows. Catalyzes the condensation of acetyl-CoA with acetoacetyl-CoA to form 3-hydroxy-3-methylglutaryl-CoA (HMG-CoA). Functions in the mevalonate (MVA) pathway leading to isopentenyl diphosphate (IPP), a key precursor for the biosynthesis of isoprenoid compounds that are building blocks of archaeal membrane lipids. The sequence is that of Hydroxymethylglutaryl-CoA synthase from Picrophilus torridus (strain ATCC 700027 / DSM 9790 / JCM 10055 / NBRC 100828 / KAW 2/3).